Here is a 439-residue protein sequence, read N- to C-terminus: Adenylosuccinate synthetase (439 aa).

Residues 25–31 (GDEGKGK) and 53–55 (GHT) each bind GTP. The active-site Proton acceptor is Asp-26. Mg(2+) contacts are provided by Asp-26 and Gly-53. IMP-binding positions include 26–29 (DEGK), 51–54 (NAGH), Thr-146, Arg-160, Asn-237, Thr-252, and Arg-316. The Proton donor role is filled by His-54. 312–318 (VTTGRRR) lines the substrate pocket. GTP is bound by residues Arg-318, 344–346 (KLD), and 426–428 (GVG).

Belongs to the adenylosuccinate synthetase family. Homodimer. Mg(2+) is required as a cofactor.

It is found in the cytoplasm. It carries out the reaction IMP + L-aspartate + GTP = N(6)-(1,2-dicarboxyethyl)-AMP + GDP + phosphate + 2 H(+). Its pathway is purine metabolism; AMP biosynthesis via de novo pathway; AMP from IMP: step 1/2. Plays an important role in the de novo pathway and in the salvage pathway of purine nucleotide biosynthesis. Catalyzes the first committed step in the biosynthesis of AMP from IMP. In Mycosarcoma maydis (Corn smut fungus), this protein is Adenylosuccinate synthetase.